We begin with the raw amino-acid sequence, 208 residues long: NAD(P)H-hydrate epimerase (208 aa).

The YjeF N-terminal domain maps to 10 to 208 (IRDAERQTLA…TLGVIMTPAN (199 aa)). 54–58 (NNGGD) is a binding site for (6S)-NADPHX. Residues N55 and D117 each contribute to the K(+) site. Residues 121-127 (GIGLNRP) and D150 contribute to the (6S)-NADPHX site. S153 is a K(+) binding site.

It belongs to the NnrE/AIBP family. It depends on K(+) as a cofactor.

The catalysed reaction is (6R)-NADHX = (6S)-NADHX. The enzyme catalyses (6R)-NADPHX = (6S)-NADPHX. Its function is as follows. Catalyzes the epimerization of the S- and R-forms of NAD(P)HX, a damaged form of NAD(P)H that is a result of enzymatic or heat-dependent hydration. This is a prerequisite for the S-specific NAD(P)H-hydrate dehydratase to allow the repair of both epimers of NAD(P)HX. This Achromobacter xylosoxidans (strain A8) protein is NAD(P)H-hydrate epimerase.